The sequence spans 282 residues: 4-diphosphocytidyl-2-C-methyl-D-erythritol kinase (282 aa).

The active site involves K13. Position 96 to 106 (96 to 106 (PMGGGIGGGSS)) interacts with ATP. Residue D138 is part of the active site.

The protein belongs to the GHMP kinase family. IspE subfamily.

The enzyme catalyses 4-CDP-2-C-methyl-D-erythritol + ATP = 4-CDP-2-C-methyl-D-erythritol 2-phosphate + ADP + H(+). It participates in isoprenoid biosynthesis; isopentenyl diphosphate biosynthesis via DXP pathway; isopentenyl diphosphate from 1-deoxy-D-xylulose 5-phosphate: step 3/6. In terms of biological role, catalyzes the phosphorylation of the position 2 hydroxy group of 4-diphosphocytidyl-2C-methyl-D-erythritol. This Pseudomonas syringae pv. tomato (strain ATCC BAA-871 / DC3000) protein is 4-diphosphocytidyl-2-C-methyl-D-erythritol kinase.